Consider the following 878-residue polypeptide: Alanine--tRNA ligase (878 aa).

4 residues coordinate Zn(2+): H567, H571, C669, and H673.

This sequence belongs to the class-II aminoacyl-tRNA synthetase family. It depends on Zn(2+) as a cofactor.

It is found in the cytoplasm. It catalyses the reaction tRNA(Ala) + L-alanine + ATP = L-alanyl-tRNA(Ala) + AMP + diphosphate. Catalyzes the attachment of alanine to tRNA(Ala) in a two-step reaction: alanine is first activated by ATP to form Ala-AMP and then transferred to the acceptor end of tRNA(Ala). Also edits incorrectly charged Ser-tRNA(Ala) and Gly-tRNA(Ala) via its editing domain. In Rickettsia canadensis (strain McKiel), this protein is Alanine--tRNA ligase.